The sequence spans 316 residues: ATP synthase gamma chain (316 aa).

The protein belongs to the ATPase gamma chain family. As to quaternary structure, F-type ATPases have 2 components, CF(1) - the catalytic core - and CF(0) - the membrane proton channel. CF(1) has five subunits: alpha(3), beta(3), gamma(1), delta(1), epsilon(1). CF(0) has three main subunits: a, b and c.

The protein localises to the cellular thylakoid membrane. Its function is as follows. Produces ATP from ADP in the presence of a proton gradient across the membrane. The gamma chain is believed to be important in regulating ATPase activity and the flow of protons through the CF(0) complex. This is ATP synthase gamma chain from Parasynechococcus marenigrum (strain WH8102).